A 418-amino-acid polypeptide reads, in one-letter code: Geranylgeranyl pyrophosphate synthase (418 aa).

The span at 51 to 64 shows a compositional bias: polar residues; sequence TSSTGIPTSLNATP. Residues 51–73 form a disordered region; it reads TSSTGIPTSLNATPTKPVLRPVP. The isopentenyl diphosphate site is built by lysine 143, arginine 146, and histidine 175. Mg(2+) contacts are provided by aspartate 182 and aspartate 186. Arginine 191 serves as a coordination point for dimethylallyl diphosphate. Arginine 192 serves as a coordination point for isopentenyl diphosphate. Lysine 269, threonine 270, glutamine 305, lysine 322, and lysine 332 together coordinate dimethylallyl diphosphate.

The protein belongs to the FPP/GGPP synthase family. Mg(2+) serves as cofactor.

It localises to the cytoplasm. It catalyses the reaction isopentenyl diphosphate + dimethylallyl diphosphate = (2E)-geranyl diphosphate + diphosphate. It carries out the reaction isopentenyl diphosphate + (2E)-geranyl diphosphate = (2E,6E)-farnesyl diphosphate + diphosphate. The catalysed reaction is isopentenyl diphosphate + (2E,6E)-farnesyl diphosphate = (2E,6E,10E)-geranylgeranyl diphosphate + diphosphate. It functions in the pathway isoprenoid biosynthesis; farnesyl diphosphate biosynthesis; farnesyl diphosphate from geranyl diphosphate and isopentenyl diphosphate: step 1/1. The protein operates within isoprenoid biosynthesis; geranyl diphosphate biosynthesis; geranyl diphosphate from dimethylallyl diphosphate and isopentenyl diphosphate: step 1/1. Its pathway is isoprenoid biosynthesis; geranylgeranyl diphosphate biosynthesis; geranylgeranyl diphosphate from farnesyl diphosphate and isopentenyl diphosphate: step 1/1. Functionally, catalyzes the trans-addition of the three molecules of IPP onto DMAPP to form geranylgeranyl pyrophosphate. This is Geranylgeranyl pyrophosphate synthase (GGS) from Fusarium fujikuroi (Bakanae and foot rot disease fungus).